The chain runs to 715 residues: Formate dehydrogenase H (715 aa).

The 4Fe-4S Mo/W bis-MGD-type domain maps to 1-56 (MKKVVTVCPYCASGCKINLVVDNGKIVRAEAAQGKTNQGTLCLKGYYGWDFINDTQ). [4Fe-4S] cluster contacts are provided by Cys-8, Cys-11, Cys-15, and Cys-42. Lys-44 (electron donor/acceptor) is an active-site residue. Residues Arg-110, Sec-140, Asn-176, Asp-179, Ser-180, Cys-201, Asp-202, Arg-204, Gly-221, Asn-223, Met-297, Gln-335, Asp-404, Thr-408, Gln-428, Asp-429, Ser-445, Asp-478, Arg-581, Glu-582, His-585, Ser-587, Tyr-678, and Lys-679 each contribute to the Mo-bis(molybdopterin guanine dinucleotide) site. Residue Sec-140 is the Proton donor/acceptor of the active site. Residue Sec-140 is a non-standard amino acid, selenocysteine.

This sequence belongs to the prokaryotic molybdopterin-containing oxidoreductase family. Consists of two separable enzymatic activities: a formate dehydrogenase component (FDH-H) and hydrogenase-3. Requires [4Fe-4S] cluster as cofactor. Mo-bis(molybdopterin guanine dinucleotide) is required as a cofactor.

It carries out the reaction formate + A + H(+) = AH2 + CO2. Its activity is regulated as follows. Inhibited by aerobic conditions. In terms of biological role, decomposes formic acid to hydrogen and carbon dioxide under anaerobic conditions in the absence of exogenous electron acceptors. The protein is Formate dehydrogenase H (fdhF) of Escherichia coli (strain K12).